The following is a 305-amino-acid chain: MTLYIRRESSKLWKRFCSEISTEIGLLAENWKYLLAGLICQYIHGLAAKGVHYIHRPGPTLQDLGFFLLPELGQERSYISETVFTSVFLSFFLWTFHPFILKTKKIYTVLIWCRVLAFLVACQFLRVITFYSTQLPGPNYHCREGSKVSRLPWPKSALEVLEINPHGVMYGCGDLIFSSHMIFTLVFVRTYQKYGTKRFIKLFGWLTAIVQSLLIIASRKHYSVDVVVAWYTVNLVVFCLDKKLPELPDRTAVLLPVISKDRTKEENHKLLNGNGVDPADWRPRAQVNGKIDSNGVHTDNTMNGA.

A run of 6 helical transmembrane segments spans residues 34–54 (LLAGLICQYIHGLAAKGVHYI), 81–101 (ETVFTSVFLSFFLWTFHPFIL), 105–125 (KIYTVLIWCRVLAFLVACQFL), 168–188 (VMYGCGDLIFSSHMIFTLVFV), 198–218 (RFIKLFGWLTAIVQSLLIIAS), and 221–241 (HYSVDVVVAWYTVNLVVFCLD). The active site involves His-180. Residues His-221 and Asp-225 contribute to the active site.

This sequence belongs to the sphingomyelin synthase family. As to expression, expressed in leaves, roots, stems, flowers and siliques.

The protein resides in the golgi apparatus. Its subcellular location is the trans-Golgi network membrane. The catalysed reaction is an N-(2R-hydroxy-very-long-chain fatty acyl)-(R)-4-hydroxysphingoid base + a 1,2-diacyl-sn-glycero-3-phospho-(1D-myo-inositol) = a 1D-myo-inositol-1-phospho-N-[(R)-2-hydroxy-very-long-chain fatty acyl]-(R)-4-hydroxysphingoid base + a 1,2-diacyl-sn-glycerol. It participates in sphingolipid metabolism. Functionally, catalyzes the transfer of the phosphorylinositol group from phosphatidylinositol (PI) to phytoceramide, an essential step in sphingolipid biosynthesis. May play an important role in modulating plant programmed cell death (PCD) associated with defense (e.g. toward Golovinomyces cichoracearum) by promoting sphingolipid metabolism and thus regulating ceramide accumulation. This chain is Phosphatidylinositol:ceramide inositolphosphotransferase 2, found in Arabidopsis thaliana (Mouse-ear cress).